Reading from the N-terminus, the 412-residue chain is Aspartate kinase Ask_LysC (412 aa).

Positions 265 to 332 constitute an ACT domain; the sequence is LTIRGVPDTP…QGIAAEMGAR (68 aa).

It belongs to the aspartokinase family.

It localises to the cytoplasm. It carries out the reaction L-aspartate + ATP = 4-phospho-L-aspartate + ADP. The protein operates within amino-acid biosynthesis; L-lysine biosynthesis via DAP pathway; (S)-tetrahydrodipicolinate from L-aspartate: step 1/4. It functions in the pathway amino-acid biosynthesis; L-methionine biosynthesis via de novo pathway; L-homoserine from L-aspartate: step 1/3. It participates in amino-acid biosynthesis; L-threonine biosynthesis; L-threonine from L-aspartate: step 1/5. With respect to regulation, allosterically and strongly feedback inhibited by tryptophan. Addition of lysine alone slightly enhances activity. The simultaneous addition of lysine and tryptophan leads to very strong feedback inhibition of the enzyme. The feedback control by tryptophan is reduced in the presence of the compatible solutes hydroxyectoine or ectoine. Involved in the biosynthesis of L-aspartate-beta-semialdehyde which is a central intermediate in the biosynthesis of different amino acids (L-lysine, L-methionine, L-threonine). Catalyzes the phosphorylation of the beta-carboxyl group of L-aspartate to yield 4-phospho-L-aspartate. In Stutzerimonas stutzeri (strain A1501) (Pseudomonas stutzeri), this protein is Aspartate kinase Ask_LysC (lysC).